Consider the following 172-residue polypeptide: NADH-ubiquinone oxidoreductase chain 6 (172 aa).

The next 5 membrane-spanning stretches (helical) occupy residues 1 to 21 (MAFYLSFLMAALVGGMIAIAS), 24 to 44 (APYFAAFGLVVVAGVGCGILV), 53 to 73 (LILFLIYLGGMLVVFAYSAAL), 86 to 106 (VVFWRVMVYGLVVIVAAGFLL), and 140 to 160 (GKMLVICAWVLLLTLFVVLEV).

Belongs to the complex I subunit 6 family. As to quaternary structure, core subunit of respiratory chain NADH dehydrogenase (Complex I) which is composed of 45 different subunits.

It is found in the mitochondrion inner membrane. It catalyses the reaction a ubiquinone + NADH + 5 H(+)(in) = a ubiquinol + NAD(+) + 4 H(+)(out). Its function is as follows. Core subunit of the mitochondrial membrane respiratory chain NADH dehydrogenase (Complex I) which catalyzes electron transfer from NADH through the respiratory chain, using ubiquinone as an electron acceptor. Essential for the catalytic activity and assembly of complex I. The sequence is that of NADH-ubiquinone oxidoreductase chain 6 (mt-nd6) from Danio rerio (Zebrafish).